Consider the following 132-residue polypeptide: L-ectoine synthase (132 aa).

It belongs to the ectoine synthase family.

The catalysed reaction is (2S)-4-acetamido-2-aminobutanoate = L-ectoine + H2O. The protein operates within amine and polyamine biosynthesis; ectoine biosynthesis; L-ectoine from L-aspartate 4-semialdehyde: step 3/3. Its function is as follows. Catalyzes the circularization of gamma-N-acetyl-alpha,gamma-diaminobutyric acid (ADABA) to ectoine (1,4,5,6-tetrahydro-2-methyl-4-pyrimidine carboxylic acid), which is an excellent osmoprotectant. This chain is L-ectoine synthase, found in Bordetella avium (strain 197N).